The chain runs to 117 residues: Photosystem II reaction center Psb28 protein (117 aa).

Belongs to the Psb28 family. In terms of assembly, part of the photosystem II complex.

The protein resides in the cellular thylakoid membrane. In Prochlorococcus marinus (strain MIT 9211), this protein is Photosystem II reaction center Psb28 protein.